A 727-amino-acid polypeptide reads, in one-letter code: Pre-B-cell leukemia transcription factor-interacting protein 1 (727 aa).

The span at 1–10 shows a compositional bias: polar residues; the sequence is MASCPDSDNS. Positions 1-135 are disordered; that stretch reads MASCPDSDNS…SPHRSLPSSP (135 aa). Low complexity predominate over residues 39 to 53; sequence RAPQSPSRAAAEESA. Phosphoserine is present on serine 43. The span at 61-70 shows a compositional bias: polar residues; the sequence is TVSQNESSKS. Phosphoserine is present on residues serine 130, serine 134, serine 147, serine 148, and serine 149. Position 153 is a phosphothreonine (threonine 153). 2 coiled-coil regions span residues 269-353 and 380-421; these read QNMA…QGAD and SPGF…SLKE. Positions 488–506 match the Nuclear localization signal motif; that stretch reads WKTEHWKHKKEASGREKSW. Disordered stretches follow at residues 491 to 568 and 701 to 727; these read EHWK…AKDR and KRSG…HRQG. 3 stretches are compositionally biased toward basic and acidic residues: residues 498–544, 551–568, and 716–727; these read EASG…EPPR, PSGE…AKDR, and GPREEHSPHRQG. Positions 696–719 match the Nuclear localization signal motif; the sequence is DKALKKRSGKKDKHLQNRVVGPRE.

Interacts with ESR1, PBX1, PBX2 and PBX3. Interacts with TEX11.

The protein localises to the cytoplasm. It localises to the cytoskeleton. The protein resides in the nucleus. In terms of biological role, regulator of pre-B-cell leukemia transcription factors (BPXs) function. Inhibits the binding of PBX1-HOX complex to DNA and blocks the transcriptional activity of E2A-PBX1. Tethers estrogen receptor-alpha (ESR1) to microtubules and allows them to influence estrogen receptors-alpha signaling. The protein is Pre-B-cell leukemia transcription factor-interacting protein 1 (PBXIP1) of Bos taurus (Bovine).